A 264-amino-acid chain; its full sequence is Hemin import ATP-binding protein HmuV (264 aa).

The 240-residue stretch at 2 to 241 folds into the ABC transporter domain; the sequence is IEVSGVSVRL…ETMLAVFGCA (240 aa). 34–41 contacts ATP; that stretch reads GPNGSGKT.

The protein belongs to the ABC transporter superfamily. Heme (hemin) importer (TC 3.A.1.14.5) family. As to quaternary structure, the complex is composed of two ATP-binding proteins (HmuV), two transmembrane proteins (HmuU) and a solute-binding protein (HmuT).

It localises to the cell inner membrane. Part of the ABC transporter complex HmuTUV involved in hemin import. Responsible for energy coupling to the transport system. This chain is Hemin import ATP-binding protein HmuV, found in Rhizobium johnstonii (strain DSM 114642 / LMG 32736 / 3841) (Rhizobium leguminosarum bv. viciae).